A 204-amino-acid polypeptide reads, in one-letter code: Proteasome subunit beta 1 (204 aa).

Positions Met-1–Ala-9 are cleaved as a propeptide — removed in mature form; by autocatalysis. Thr-10 functions as the Nucleophile in the catalytic mechanism.

It belongs to the peptidase T1B family. In terms of assembly, the 20S proteasome core is composed of 14 alpha and 14 beta subunits that assemble into four stacked heptameric rings, resulting in a barrel-shaped structure. The two inner rings, each composed of seven catalytic beta subunits, are sandwiched by two outer rings, each composed of seven alpha subunits. The catalytic chamber with the active sites is on the inside of the barrel. Has a gated structure, the ends of the cylinder being occluded by the N-termini of the alpha-subunits. Is capped at one or both ends by the proteasome regulatory ATPase, PAN.

It localises to the cytoplasm. It carries out the reaction Cleavage of peptide bonds with very broad specificity.. The formation of the proteasomal ATPase PAN-20S proteasome complex, via the docking of the C-termini of PAN into the intersubunit pockets in the alpha-rings, triggers opening of the gate for substrate entry. Interconversion between the open-gate and close-gate conformations leads to a dynamic regulation of the 20S proteasome proteolysis activity. Functionally, component of the proteasome core, a large protease complex with broad specificity involved in protein degradation. The chain is Proteasome subunit beta 1 from Hyperthermus butylicus (strain DSM 5456 / JCM 9403 / PLM1-5).